A 512-amino-acid polypeptide reads, in one-letter code: GMP synthase [glutamine-hydrolyzing] (512 aa).

Residues 7 to 197 (TIIVLDFGSQ…VFGVCGCSEG (191 aa)) enclose the Glutamine amidotransferase type-1 domain. Residue cysteine 84 is the Nucleophile of the active site. Catalysis depends on residues histidine 171 and glutamate 173. The GMPS ATP-PPase domain occupies 198–387 (WNMENFIEVE…LGIPDEIVWR (190 aa)). 225–231 (SGGVDSS) provides a ligand contact to ATP.

Homodimer.

It carries out the reaction XMP + L-glutamine + ATP + H2O = GMP + L-glutamate + AMP + diphosphate + 2 H(+). It participates in purine metabolism; GMP biosynthesis; GMP from XMP (L-Gln route): step 1/1. Its function is as follows. Catalyzes the synthesis of GMP from XMP. This chain is GMP synthase [glutamine-hydrolyzing], found in Bacillus cereus (strain G9842).